Here is a 211-residue protein sequence, read N- to C-terminus: Probable nicotinate-nucleotide adenylyltransferase (211 aa).

The protein belongs to the NadD family.

It carries out the reaction nicotinate beta-D-ribonucleotide + ATP + H(+) = deamido-NAD(+) + diphosphate. It functions in the pathway cofactor biosynthesis; NAD(+) biosynthesis; deamido-NAD(+) from nicotinate D-ribonucleotide: step 1/1. Its function is as follows. Catalyzes the reversible adenylation of nicotinate mononucleotide (NaMN) to nicotinic acid adenine dinucleotide (NaAD). In Gemmatimonas aurantiaca (strain DSM 14586 / JCM 11422 / NBRC 100505 / T-27), this protein is Probable nicotinate-nucleotide adenylyltransferase.